Consider the following 399-residue polypeptide: Elongation factor Tu (399 aa).

Residues 10-209 (KPHVNIGTIG…EVDAYIPTPK (200 aa)) form the tr-type G domain. Positions 19-26 (GHVDHGKT) are G1. 19 to 26 (GHVDHGKT) contacts GTP. A Mg(2+)-binding site is contributed by Thr-26. Positions 60 to 64 (GITIA) are G2. Residues 81–84 (DCPG) are G3. Residues 81-85 (DCPGH) and 136-139 (NKQD) contribute to the GTP site. The interval 136 to 139 (NKQD) is G4. Residues 174 to 176 (SAL) form a G5 region.

This sequence belongs to the TRAFAC class translation factor GTPase superfamily. Classic translation factor GTPase family. EF-Tu/EF-1A subfamily. As to quaternary structure, monomer.

Its subcellular location is the cytoplasm. It catalyses the reaction GTP + H2O = GDP + phosphate + H(+). GTP hydrolase that promotes the GTP-dependent binding of aminoacyl-tRNA to the A-site of ribosomes during protein biosynthesis. The sequence is that of Elongation factor Tu from Helicobacter pylori (strain P12).